The sequence spans 212 residues: Glycerol-3-phosphate acyltransferase (212 aa).

4 helical membrane-spanning segments follow: residues 3–23, 78–98, 115–135, and 155–177; these read ILLA…VVVS, DVAV…PVFF, AVHP…AFFF, and FLFG…LLVW.

The protein belongs to the PlsY family. Probably interacts with PlsX.

It localises to the cell inner membrane. The enzyme catalyses an acyl phosphate + sn-glycerol 3-phosphate = a 1-acyl-sn-glycero-3-phosphate + phosphate. It functions in the pathway lipid metabolism; phospholipid metabolism. Its function is as follows. Catalyzes the transfer of an acyl group from acyl-phosphate (acyl-PO(4)) to glycerol-3-phosphate (G3P) to form lysophosphatidic acid (LPA). This enzyme utilizes acyl-phosphate as fatty acyl donor, but not acyl-CoA or acyl-ACP. In Burkholderia ambifaria (strain ATCC BAA-244 / DSM 16087 / CCUG 44356 / LMG 19182 / AMMD) (Burkholderia cepacia (strain AMMD)), this protein is Glycerol-3-phosphate acyltransferase.